The chain runs to 227 residues: ATP synthase F(0) complex subunit a (227 aa).

Transmembrane regions (helical) follow at residues 14-34 (LLGI…LPSP), 69-89 (WALI…LGLL), 98-118 (QLSM…LTGL), 139-159 (IPAL…ALGV), 174-194 (LIST…VLTA), and 196-216 (VLLL…YVFV).

The protein belongs to the ATPase A chain family. As to quaternary structure, component of the ATP synthase complex composed at least of ATP5F1A/subunit alpha, ATP5F1B/subunit beta, ATP5MC1/subunit c (homooctomer), MT-ATP6/subunit a, MT-ATP8/subunit 8, ATP5ME/subunit e, ATP5MF/subunit f, ATP5MG/subunit g, ATP5MK/subunit k, ATP5MJ/subunit j, ATP5F1C/subunit gamma, ATP5F1D/subunit delta, ATP5F1E/subunit epsilon, ATP5PF/subunit F6, ATP5PB/subunit b, ATP5PD/subunit d, ATP5PO/subunit OSCP. ATP synthase complex consists of a soluble F(1) head domain (subunits alpha(3) and beta(3)) - the catalytic core - and a membrane F(0) domain - the membrane proton channel (subunits c, a, 8, e, f, g, k and j). These two domains are linked by a central stalk (subunits gamma, delta, and epsilon) rotating inside the F1 region and a stationary peripheral stalk (subunits F6, b, d, and OSCP). Interacts with DNAJC30; interaction is direct.

The protein localises to the mitochondrion inner membrane. It carries out the reaction H(+)(in) = H(+)(out). Functionally, subunit a, of the mitochondrial membrane ATP synthase complex (F(1)F(0) ATP synthase or Complex V) that produces ATP from ADP in the presence of a proton gradient across the membrane which is generated by electron transport complexes of the respiratory chain. ATP synthase complex consist of a soluble F(1) head domain - the catalytic core - and a membrane F(1) domain - the membrane proton channel. These two domains are linked by a central stalk rotating inside the F(1) region and a stationary peripheral stalk. During catalysis, ATP synthesis in the catalytic domain of F(1) is coupled via a rotary mechanism of the central stalk subunits to proton translocation. With the subunit c (ATP5MC1), forms the proton-conducting channel in the F(0) domain, that contains two crucial half-channels (inlet and outlet) that facilitate proton movement from the mitochondrial intermembrane space (IMS) into the matrix. Protons are taken up via the inlet half-channel and released through the outlet half-channel, following a Grotthuss mechanism. This is ATP synthase F(0) complex subunit a from Struthio camelus (Common ostrich).